The chain runs to 424 residues: Histidine--tRNA ligase (424 aa).

It belongs to the class-II aminoacyl-tRNA synthetase family. In terms of assembly, homodimer.

Its subcellular location is the cytoplasm. The catalysed reaction is tRNA(His) + L-histidine + ATP = L-histidyl-tRNA(His) + AMP + diphosphate + H(+). The protein is Histidine--tRNA ligase of Shewanella woodyi (strain ATCC 51908 / MS32).